Reading from the N-terminus, the 348-residue chain is Ferredoxin--NADP reductase 1 (348 aa).

FAD is bound by residues E36, K44, Y48, I88, P123, D285, and S326. The tract at residues 329 to 348 (EKFKKKNEQLKQEKQAQLMN) is disordered.

The protein belongs to the ferredoxin--NADP reductase type 2 family. In terms of assembly, homodimer. FAD is required as a cofactor.

It carries out the reaction 2 reduced [2Fe-2S]-[ferredoxin] + NADP(+) + H(+) = 2 oxidized [2Fe-2S]-[ferredoxin] + NADPH. The sequence is that of Ferredoxin--NADP reductase 1 from Shouchella clausii (strain KSM-K16) (Alkalihalobacillus clausii).